The sequence spans 327 residues: DNA-directed RNA polymerase subunit alpha (327 aa).

An alpha N-terminal domain (alpha-NTD) region spans residues 1-231; the sequence is MIYQMQMPAK…DHVLLFADFS (231 aa). Residues 247–327 form an alpha C-terminal domain (alpha-CTD) region; the sequence is DEFETMRRLL…GMDITRYQMK (81 aa).

It belongs to the RNA polymerase alpha chain family. In terms of assembly, homodimer. The RNAP catalytic core consists of 2 alpha, 1 beta, 1 beta' and 1 omega subunit. When a sigma factor is associated with the core the holoenzyme is formed, which can initiate transcription.

The enzyme catalyses RNA(n) + a ribonucleoside 5'-triphosphate = RNA(n+1) + diphosphate. In terms of biological role, DNA-dependent RNA polymerase catalyzes the transcription of DNA into RNA using the four ribonucleoside triphosphates as substrates. In Chlorobium chlorochromatii (strain CaD3), this protein is DNA-directed RNA polymerase subunit alpha.